Here is a 310-residue protein sequence, read N- to C-terminus: Homoserine kinase (310 aa).

P91–C101 is an ATP binding site.

It belongs to the GHMP kinase family. Homoserine kinase subfamily.

Its subcellular location is the cytoplasm. It catalyses the reaction L-homoserine + ATP = O-phospho-L-homoserine + ADP + H(+). Its pathway is amino-acid biosynthesis; L-threonine biosynthesis; L-threonine from L-aspartate: step 4/5. Its function is as follows. Catalyzes the ATP-dependent phosphorylation of L-homoserine to L-homoserine phosphate. This Shigella flexneri serotype 5b (strain 8401) protein is Homoserine kinase.